A 123-amino-acid polypeptide reads, in one-letter code: Neuropeptide-like peptides nlp-40 (123 aa).

The first 17 residues, 1 to 17 (MKLVILLSFVATVAVFA), serve as a signal peptide directing secretion. Propeptides lie at residues 30–31 (RA), 66–67 (KR), and 75–76 (KR).

As to expression, expressed in intestinal cells.

The protein localises to the secreted. It is found in the cytoplasmic vesicle. Functionally, neuropeptide ligand for the G-protein coupled receptor aex-2. Activates and regulates the rhythmic calcium influx in DVB GABergic neurons during the defecation motor program, which is a coordinated series of three muscle contractions that occurs every 45 seconds. In Caenorhabditis elegans, this protein is Neuropeptide-like peptides nlp-40.